The sequence spans 363 residues: Serpentine receptor class beta-18 (363 aa).

Transmembrane regions (helical) follow at residues 52–72 (LAQFSHVVFSFMGLIIVVVYI), 92–112 (MLLFIVAHSIDMIVLHIYHII), 135–155 (FRYTFSFCSMGLAICTYCIYI), 172–192 (LILAAQICQLIVISSLIIIWV), 218–238 (KATIAVFPINFICFFLSIGLF), 276–296 (AALMALFSVASLLMRLVYNFL), and 303–323 (TIATLSYIMSIYCFTVPLVIV).

This sequence belongs to the nematode receptor-like protein srb family.

The protein localises to the membrane. The chain is Serpentine receptor class beta-18 (srb-18) from Caenorhabditis elegans.